Reading from the N-terminus, the 160-residue chain is Cyanate hydratase (160 aa).

Residues arginine 100, glutamate 103, and serine 126 contribute to the active site.

This sequence belongs to the cyanase family.

It catalyses the reaction cyanate + hydrogencarbonate + 3 H(+) = NH4(+) + 2 CO2. Functionally, catalyzes the reaction of cyanate with bicarbonate to produce ammonia and carbon dioxide. The chain is Cyanate hydratase from Neosartorya fischeri (strain ATCC 1020 / DSM 3700 / CBS 544.65 / FGSC A1164 / JCM 1740 / NRRL 181 / WB 181) (Aspergillus fischerianus).